Here is a 297-residue protein sequence, read N- to C-terminus: Phosphatidylinositol N-acetylglucosaminyltransferase subunit C (297 aa).

4 consecutive transmembrane segments (helical) span residues 67 to 87, 88 to 108, 153 to 173, and 239 to 259; these read VFVV…WLFG, TGLA…GGDG, AVFM…AAIV, and AFGG…LLLF.

It belongs to the PIGC family. Component of the glycosylphosphatidylinositol-N-acetylglucosaminyltransferase (GPI-GnT) complex composed at least by PIGA, PIGC, PIGH, PIGP, PIGQ, PIGY and DPM2. Interacts with PIGQ. Interacts with the heterodimer PIGA:PIGH.

It localises to the endoplasmic reticulum membrane. The protein operates within glycolipid biosynthesis; glycosylphosphatidylinositol-anchor biosynthesis. In terms of biological role, part of the glycosylphosphatidylinositol-N-acetylglucosaminyltransferase (GPI-GnT) complex that catalyzes the transfer of N-acetylglucosamine from UDP-N-acetylglucosamine to phosphatidylinositol and participates in the first step of GPI biosynthesis. The chain is Phosphatidylinositol N-acetylglucosaminyltransferase subunit C from Mus musculus (Mouse).